Here is a 400-residue protein sequence, read N- to C-terminus: Sensor histidine kinase LnrJ (400 aa).

Residues 1 to 2 are Extracellular-facing; that stretch reads MK. The helical transmembrane segment at 3–23 threads the bilayer; the sequence is ALFFTRMFTLMVSCLMYLSIV. The Cytoplasmic segment spans residues 24–27; the sequence is KEDN. Residues 28–48 form a helical membrane-spanning segment; it reads WFGYVFIAAGAAMYAANHVLL. Over 49–61 the chain is Extracellular; that stretch reads TKETNAIWFCLID. The chain crosses the membrane as a helical span at residues 62–82; it reads IAIGFSFGFIFPGTGLFIIML. At 83 to 101 the chain is on the cytoplasmic side; it reads CPVAVAFFLRGFPKRTAWS. A helical membrane pass occupies residues 102 to 122; the sequence is VLCLSSILFLTVLIRTYAMFG. The Extracellular portion of the chain corresponds to 123-125; the sequence is NEF. A helical membrane pass occupies residues 126-146; sequence VIDHLTSMTFVVFCGVVGKLI. The Cytoplasmic segment spans residues 147 to 400; the sequence is RKLLDAQDTA…GPVQQKESLS (254 aa). The region spanning 190 to 385 is the Histidine kinase domain; the sequence is IYERNRMARE…TVNAEFSLAN (196 aa). At His-201 the chain carries Phosphohistidine; by autocatalysis.

In terms of processing, autophosphorylated.

The protein resides in the cell membrane. The enzyme catalyses ATP + protein L-histidine = ADP + protein N-phospho-L-histidine.. Required for resistance to linearmycins, a family of antibiotic-specialized metabolites produced by some streptomycetes. Member of the two-component regulatory system LnrJ/LnrK, which induces expression of the LnrLMN ABC transporter in response to linearmycins and other polyenes. Acts as a specific sensor for linearmycin, either directly through binding or indirectly through membrane perturbation. Probably activates LnrK by phosphorylation. May also promote biofilm formation. This chain is Sensor histidine kinase LnrJ, found in Bacillus subtilis (strain 168).